Here is an 88-residue protein sequence, read N- to C-terminus: Protein MATERNALLY EXPRESSED GENE 2 (88 aa).

The first 27 residues, 1–27 (MEYRKRVDALVFFSLLLLGYFAAHAHG), serve as a signal peptide directing secretion. Cys65 and Cys87 are joined by a disulfide.

The protein belongs to the MEG family. Expressed exclusively in endosperm.

In Zea mays (Maize), this protein is Protein MATERNALLY EXPRESSED GENE 2 (MEG2).